The primary structure comprises 102 residues: Acid shock protein (102 aa).

The signal sequence occupies residues M1–A21. A compositionally biased stretch (low complexity) spans A22–K41. The propeptide occupies A22–Q58. The disordered stretch occupies residues A22 to A102. A compositionally biased stretch (basic residues) spans A80–H90. Residues Q91–A102 show a composition bias toward low complexity.

The protein belongs to the Asr family. Proteolytic processing gives rise to the active protein.

The protein localises to the periplasm. Required for growth and/or survival at acidic conditions. The polypeptide is Acid shock protein (Escherichia coli O45:K1 (strain S88 / ExPEC)).